The primary structure comprises 763 residues: DNA polymerase 3 (763 aa).

This sequence belongs to the DNA polymerase type-B family.

It carries out the reaction DNA(n) + a 2'-deoxyribonucleoside 5'-triphosphate = DNA(n+1) + diphosphate. The chain is DNA polymerase 3 (dpo3) from Saccharolobus shibatae (strain ATCC 51178 / DSM 5389 / JCM 8931 / NBRC 15437 / B12) (Sulfolobus shibatae).